Consider the following 116-residue polypeptide: Putative iron-sulfur cluster insertion protein ErpA (116 aa).

Residues Cys-44, Cys-108, and Cys-110 each contribute to the iron-sulfur cluster site.

Belongs to the HesB/IscA family. In terms of assembly, homodimer. It depends on iron-sulfur cluster as a cofactor.

In terms of biological role, required for insertion of 4Fe-4S clusters. In Dechloromonas aromatica (strain RCB), this protein is Putative iron-sulfur cluster insertion protein ErpA.